The following is a 133-amino-acid chain: Capsid protein (133 aa).

Belongs to the Leviviricetes capsid protein family. In terms of assembly, homodimer. The homodimers binds to the viral RNA via an operator hairpin, but also to many other RNA sequences in the viral genome; this interaction probably shifts the virus from the replicative to the assembly phase and ensures specific encapsidation of the viral genome. Interacts with the maturation protein A2.

It is found in the virion. Capsid protein self-assembles to form an icosahedral capsid with a T=3 symmetry, about 26 nm in diameter, and consisting of 89 capsid proteins dimers (178 capsid proteins). Involved in viral genome encapsidation through the interaction between a capsid protein dimer and the multiple packaging signals present in the RNA genome. Binding of the capsid proteins to the viral RNA induces a conformational change required for efficient T=3 shell formation. The capsid also contains 1 copy of the A2 maturation protein. In terms of biological role, acts as a translational repressor of viral replicase synthesis late in infection. This latter function is the result of capsid protein interaction with an RNA hairpin which contains the replicase ribosome-binding site. The chain is Capsid protein from Escherichia virus Qbeta (Bacteriophage Q-beta).